The following is a 208-amino-acid chain: Large ribosomal subunit protein uL3 (208 aa).

Belongs to the universal ribosomal protein uL3 family. Part of the 50S ribosomal subunit. Forms a cluster with proteins L14 and L19.

Functionally, one of the primary rRNA binding proteins, it binds directly near the 3'-end of the 23S rRNA, where it nucleates assembly of the 50S subunit. This is Large ribosomal subunit protein uL3 from Desulfosudis oleivorans (strain DSM 6200 / JCM 39069 / Hxd3) (Desulfococcus oleovorans).